The chain runs to 376 residues: Transmembrane protein 183A (376 aa).

Disordered stretches follow at residues 1 to 20 (MARG…AMPK) and 100 to 127 (MDAQ…ELDG). The chain crosses the membrane as a helical span at residues 300–320 (LNFIFIPIVMGMIFTLFTINV).

This sequence belongs to the TMEM183 family.

The protein localises to the membrane. This chain is Transmembrane protein 183A (TMEM183A), found in Homo sapiens (Human).